A 173-amino-acid chain; its full sequence is Calcium-binding protein 5 (173 aa).

EF-hand domains are found at residues 28–63, 82–99, 105–140, and 142–173; these read DEIEELREAFLEFDKDRDGFISCKDLGNLMRTMGYM, GRVDFDDFVELMTPKLLA, IGVQEMRDAFKEFDANGDGEITLGELQQAMQRLLGD, and LTSQEISEVVQEADINGDGTVDFEEFVKMMSR. The Ca(2+) site is built by Asp-41, Asp-43, Asp-45, and Asp-52. Ca(2+)-binding residues include Asp-118, Asn-120, Asp-122, Glu-124, Glu-129, Asp-155, Asn-157, Asp-159, Thr-161, and Glu-166.

In terms of assembly, interacts with CACNA1C (via C-terminal CDB motif) in a calcium-dependent manner. Interacts with STXBP1. Interacts with MYO6. Expressed in the retina (at protein level).

Its subcellular location is the cytoplasm. In terms of biological role, inhibits calcium-dependent inactivation of L-type calcium channel and shifts voltage dependence of activation to more depolarized membrane potentials. Involved in the transmission of light signals. May positively regulate neurotransmitter vesicle endocytosis and exocytosis in a salt-dependent manner. May play a role in the extension and network organization of neurites. The sequence is that of Calcium-binding protein 5 (CABP5) from Bos taurus (Bovine).